The sequence spans 962 residues: Putative RNA Helicase B962L (962 aa).

Positions 43-229 constitute a Helicase ATP-binding domain; the sequence is IPTSLADRVL…FGIGKENIIL (187 aa). Position 56–63 (56–63) interacts with ATP; it reads SRTGSGKS. The DEAH box signature appears at 167-170; the sequence is DEAH. The region spanning 253–459 is the Helicase C-terminal domain; the sequence is ACETALTIHK…TIKKNKEGVF (207 aa). The chain crosses the membrane as a helical span at residues 521 to 541; the sequence is GYFWQAAISDIATILAVVSVA.

Belongs to the DEAD box helicase family. DEAH subfamily.

The protein localises to the host membrane. The protein resides in the virion. It catalyses the reaction ATP + H2O = ADP + phosphate + H(+). This African swine fever virus (isolate Tick/South Africa/Pretoriuskop Pr4/1996) (ASFV) protein is Putative RNA Helicase B962L.